The primary structure comprises 128 residues: Sm-like protein LSM1B (128 aa).

A Sm domain is found at 10-85 (YLSTSLASYL…VVLIGELDTE (76 aa)).

The protein belongs to the snRNP Sm proteins family. In terms of assembly, component of the heptameric LSM1-LSM7 complex that forms a seven-membered ring structure with a donut shape. The LSM subunits are arranged in the order LSM1, LSM2, LSM3, LSM6, LSM5, LSM7 and LSM4. LSM1B subunit interacts only with its two neighboring subunits, LSM2 and LSM4. In terms of tissue distribution, expressed in roots, leaves, stems, flowers and siliques.

Its subcellular location is the cytoplasm. It localises to the P-body. Functionally, component of the cytoplasmic LSM1-LSM7 complex which is involved in mRNA degradation by promoting decapping and leading to accurate 5'-3' mRNA decay. LSM1A and LSM1B are essential for the formation of the cytoplasmic LSM1-LSM7 complex which regulates developmental gene expression by the decapping of specific development-related transcripts. Required for P-body formation during heat stress. The protein is Sm-like protein LSM1B of Arabidopsis thaliana (Mouse-ear cress).